The chain runs to 93 residues: Large ribosomal subunit protein uL23c (93 aa).

The protein belongs to the universal ribosomal protein uL23 family. Part of the 50S ribosomal subunit.

The protein localises to the plastid. Its subcellular location is the chloroplast. Binds to 23S rRNA. This is Large ribosomal subunit protein uL23c (rpl23) from Fragaria ananassa (Strawberry).